The primary structure comprises 88 residues: Small ribosomal subunit protein uS15c (88 aa).

This sequence belongs to the universal ribosomal protein uS15 family. Part of the 30S ribosomal subunit.

The protein localises to the plastid. Its subcellular location is the chloroplast. This is Small ribosomal subunit protein uS15c (rps15) from Marchantia polymorpha (Common liverwort).